Reading from the N-terminus, the 254-residue chain is Persulfide dioxygenase ETHE1, mitochondrial (254 aa).

Residues 1–7 (MAEAVLR) constitute a mitochondrion transit peptide. 2 positions are modified to phosphoserine: serine 14 and serine 19. At lysine 66 the chain carries N6-acetyllysine. 3 residues coordinate Fe cation: histidine 79, histidine 135, and aspartate 154. Lysine 172 carries the post-translational modification N6-acetyllysine; alternate. Lysine 172 bears the N6-succinyllysine; alternate mark.

It belongs to the metallo-beta-lactamase superfamily. Glyoxalase II family. As to quaternary structure, homodimer. Monomer. Interacts with TST. May interact with RELA. Fe(2+) serves as cofactor. Ubiquitously expressed.

It is found in the cytoplasm. Its subcellular location is the nucleus. The protein localises to the mitochondrion matrix. It carries out the reaction S-sulfanylglutathione + O2 + H2O = sulfite + glutathione + 2 H(+). Its activity is regulated as follows. Glutathione increases enzyme activity. In terms of biological role, sulfur dioxygenase that plays an essential role in hydrogen sulfide catabolism in the mitochondrial matrix. Hydrogen sulfide (H(2)S) is first oxidized by SQRDL, giving rise to cysteine persulfide residues. ETHE1 consumes molecular oxygen to catalyze the oxidation of the persulfide, once it has been transferred to a thiophilic acceptor, such as glutathione (R-SSH). Plays an important role in metabolic homeostasis in mitochondria by metabolizing hydrogen sulfide and preventing the accumulation of supraphysiological H(2)S levels that have toxic effects, due to the inhibition of cytochrome c oxidase. First described as a protein that can shuttle between the nucleus and the cytoplasm and suppress p53-induced apoptosis by sequestering the transcription factor RELA/NFKB3 in the cytoplasm and preventing its accumulation in the nucleus. In Homo sapiens (Human), this protein is Persulfide dioxygenase ETHE1, mitochondrial (ETHE1).